Consider the following 427-residue polypeptide: MSNNQTLFERAQRTIPGGVNSPVRAFRSVGGTPRFVARAQGAYFWDADGKRYIDYIGSWGPMIVGHVHPDVLAAVQHVLADGFSFGAPTEAEIEIAEEICKLVPSIEQVRMVSSGTEATMSALRLARGFTGRSRIVKFEGCYHGHADSLLVKAGSGLLTFGNPTSAGVPADVAKHTTVLEYNNVAALEEAFAAFGGEIAAVIVEPVAGNMNLVRGTPEFLNALRALTAKHGAVLIFDEVMCGFRVALGGAQQHYGITPDLTCLGKVIGGGMPAAAFGGRGDIMSHLAPLGGVYQAGTLSGNPVAVAAGLATLRLIQAPGFHDALADKTRRLADSLAAEARAAGVPFSADAIGGMFGLYFTEQVPASFADVTKSDIERFNRFFHLMLDAGVYFAPSAYEAGFVSSAHDDATLDATLDAARRAFAALRA.

Lys-265 bears the N6-(pyridoxal phosphate)lysine mark.

This sequence belongs to the class-III pyridoxal-phosphate-dependent aminotransferase family. HemL subfamily. As to quaternary structure, homodimer. Pyridoxal 5'-phosphate serves as cofactor.

The protein resides in the cytoplasm. It catalyses the reaction (S)-4-amino-5-oxopentanoate = 5-aminolevulinate. It participates in porphyrin-containing compound metabolism; protoporphyrin-IX biosynthesis; 5-aminolevulinate from L-glutamyl-tRNA(Glu): step 2/2. The sequence is that of Glutamate-1-semialdehyde 2,1-aminomutase from Burkholderia pseudomallei (strain 668).